Consider the following 371-residue polypeptide: Carbamoyl phosphate synthase small chain (371 aa).

The CPSase stretch occupies residues 1–190 (MRKTAILALE…LYRENEKPLV (190 aa)). Positions 47, 237, and 239 each coordinate L-glutamine. One can recognise a Glutamine amidotransferase type-1 domain in the interval 189–371 (LVAVIDFGVK…FKEFVKMAQG (183 aa)). Cysteine 264 serves as the catalytic Nucleophile. Leucine 265, glutamine 268, asparagine 306, and phenylalanine 309 together coordinate L-glutamine. Active-site residues include histidine 348 and glutamate 350.

Belongs to the CarA family. As to quaternary structure, composed of two chains; the small (or glutamine) chain promotes the hydrolysis of glutamine to ammonia, which is used by the large (or ammonia) chain to synthesize carbamoyl phosphate. Tetramer of heterodimers (alpha,beta)4.

The enzyme catalyses hydrogencarbonate + L-glutamine + 2 ATP + H2O = carbamoyl phosphate + L-glutamate + 2 ADP + phosphate + 2 H(+). It catalyses the reaction L-glutamine + H2O = L-glutamate + NH4(+). Its pathway is amino-acid biosynthesis; L-arginine biosynthesis; carbamoyl phosphate from bicarbonate: step 1/1. It functions in the pathway pyrimidine metabolism; UMP biosynthesis via de novo pathway; (S)-dihydroorotate from bicarbonate: step 1/3. Functionally, small subunit of the glutamine-dependent carbamoyl phosphate synthetase (CPSase). CPSase catalyzes the formation of carbamoyl phosphate from the ammonia moiety of glutamine, carbonate, and phosphate donated by ATP, constituting the first step of 2 biosynthetic pathways, one leading to arginine and/or urea and the other to pyrimidine nucleotides. The small subunit (glutamine amidotransferase) binds and cleaves glutamine to supply the large subunit with the substrate ammonia. This is Carbamoyl phosphate synthase small chain from Aquifex aeolicus (strain VF5).